The sequence spans 145 residues: Actin-depolymerizing factor 11 (145 aa).

The ADF-H domain maps to 11–145; it reads SSGIGVAAEC…DIELLRERAH (135 aa).

It belongs to the actin-binding proteins ADF family.

Its function is as follows. Actin-depolymerizing protein. Severs actin filaments (F-actin) and binds to actin monomers. The sequence is that of Actin-depolymerizing factor 11 (ADF11) from Oryza sativa subsp. japonica (Rice).